Here is a 34-residue protein sequence, read N- to C-terminus: Photosystem II reaction center protein Psb30 (34 aa).

A helical membrane pass occupies residues 5 to 25; sequence VLAQLTVLAFVIAVGPITLIW.

Belongs to the Psb30/Ycf12 family. In terms of assembly, PSII is composed of 1 copy each of membrane proteins PsbA, PsbB, PsbC, PsbD, PsbE, PsbF, PsbH, PsbI, PsbJ, PsbK, PsbL, PsbM, PsbT, PsbX, PsbY, PsbZ, Psb30/Ycf12, peripheral proteins of the oxygen-evolving complex and a large number of cofactors. It forms dimeric complexes.

The protein resides in the plastid. It is found in the chloroplast thylakoid membrane. In terms of biological role, a core subunit of photosystem II (PSII), probably helps stabilize the reaction center. In Cyanidioschyzon merolae (strain NIES-3377 / 10D) (Unicellular red alga), this protein is Photosystem II reaction center protein Psb30.